Reading from the N-terminus, the 214-residue chain is 3,4-dihydroxy-2-butanone 4-phosphate synthase (214 aa).

Residues 40–41 (RE), D45, 153–157 (RRGHT), and E177 contribute to the D-ribulose 5-phosphate site. Position 41 (E41) interacts with Mg(2+). Position 156 (H156) interacts with Mg(2+).

The protein belongs to the DHBP synthase family. In terms of assembly, homodimer. Requires Mg(2+) as cofactor. It depends on Mn(2+) as a cofactor.

It catalyses the reaction D-ribulose 5-phosphate = (2S)-2-hydroxy-3-oxobutyl phosphate + formate + H(+). Its pathway is cofactor biosynthesis; riboflavin biosynthesis; 2-hydroxy-3-oxobutyl phosphate from D-ribulose 5-phosphate: step 1/1. Catalyzes the conversion of D-ribulose 5-phosphate to formate and 3,4-dihydroxy-2-butanone 4-phosphate. The polypeptide is 3,4-dihydroxy-2-butanone 4-phosphate synthase (Rhodospirillum rubrum (strain ATCC 11170 / ATH 1.1.1 / DSM 467 / LMG 4362 / NCIMB 8255 / S1)).